The primary structure comprises 100 residues: Aspartyl/glutamyl-tRNA(Asn/Gln) amidotransferase subunit C (100 aa).

It belongs to the GatC family. Heterotrimer of A, B and C subunits.

It catalyses the reaction L-glutamyl-tRNA(Gln) + L-glutamine + ATP + H2O = L-glutaminyl-tRNA(Gln) + L-glutamate + ADP + phosphate + H(+). It carries out the reaction L-aspartyl-tRNA(Asn) + L-glutamine + ATP + H2O = L-asparaginyl-tRNA(Asn) + L-glutamate + ADP + phosphate + 2 H(+). Functionally, allows the formation of correctly charged Asn-tRNA(Asn) or Gln-tRNA(Gln) through the transamidation of misacylated Asp-tRNA(Asn) or Glu-tRNA(Gln) in organisms which lack either or both of asparaginyl-tRNA or glutaminyl-tRNA synthetases. The reaction takes place in the presence of glutamine and ATP through an activated phospho-Asp-tRNA(Asn) or phospho-Glu-tRNA(Gln). This Streptococcus equi subsp. zooepidemicus (strain MGCS10565) protein is Aspartyl/glutamyl-tRNA(Asn/Gln) amidotransferase subunit C.